A 200-amino-acid polypeptide reads, in one-letter code: uncharacterized protein (200 aa).

The N-terminal stretch at 1–19 (MNAMFHSLFALSFVSLVAS) is a signal peptide. Residues 148–168 (FMVIVSLAAFCISVLAGLALQ) form a helical membrane-spanning segment.

It localises to the membrane. This is an uncharacterized protein from Caenorhabditis elegans.